The sequence spans 491 residues: E3 ubiquitin-protein ligase Hakai (491 aa).

2 disordered regions span residues 1 to 20 (MDHTDNELQGTNSSGSLGGL) and 33 to 61 (KQASKVKPAPRTQRTVSRMPAKAPQGDEE). The RING-type zinc-finger motif lies at 109 to 149 (CDKCGLPIKVYGRMIPCKHVFCYDCAILHEKKGDKMCPGCS). The HYB domain stretch occupies residues 148-206 (CSDPVQRIEQCTRGSLFMCSIVQGCKRTYLSQRDLQAHINHRHMRAGKPVTRASLENVH). The C2H2-type zinc finger occupies 164 to 190 (FMCSIVQGCKRTYLSQRDLQAHINHRH). Phosphoserine is present on residues Ser-201, Ser-285, and Ser-290. The disordered stretch occupies residues 255–491 (QPHEDIRAPP…DQTRYRPYYQ (237 aa)). Composition is skewed to pro residues over residues 342–359 (APPPPPPPPISHPMPHPP), 372–389 (APPPPMTSAPPPITPPPG), and 399–423 (MNHPPPGPPPPQHGGPPVTAPPPHH). The span at 427 to 442 (NSLPQFTEDQGTLSPP) shows a compositional bias: polar residues. Residues 457–478 (PRGPPPPPRMQGPPSQTPLPGP) are compositionally biased toward pro residues.

This sequence belongs to the Hakai family. In terms of assembly, homodimer. Interacts with tyrosine-phosphorylated SRC substrates. Component of the WMM complex, a N6-methyltransferase complex composed of a catalytic subcomplex, named MAC, and of an associated subcomplex, named MACOM. The MAC subcomplex is composed of METTL3 and METTL14. The MACOM subcomplex is composed of WTAP, ZC3H13, CBLL1/HAKAI, VIRMA, and, in some cases of RBM15 (RBM15 or RBM15B). Also a component of a MACOM-like complex, named WTAP complex, composed of WTAP, ZC3H13, CBLL1, VIRMA, RBM15, BCLAF1 and THRAP3. Post-translationally, phosphorylated on tyrosine residues. Detected in heart, brain, spleen, lung, liver, skeletal muscle, kidney and testis.

It localises to the nucleus speckle. Its subcellular location is the nucleus. The protein localises to the nucleoplasm. It is found in the cytoplasm. It catalyses the reaction S-ubiquitinyl-[E2 ubiquitin-conjugating enzyme]-L-cysteine + [acceptor protein]-L-lysine = [E2 ubiquitin-conjugating enzyme]-L-cysteine + N(6)-ubiquitinyl-[acceptor protein]-L-lysine.. The protein operates within protein modification; protein ubiquitination. Functionally, E3 ubiquitin-protein ligase that mediates ubiquitination of several tyrosine-phosphorylated Src substrates, including CDH1, CTTN and DOK1. Targets CDH1 for endocytosis and degradation. Associated component of the WMM complex, a complex that mediates N6-methyladenosine (m6A) methylation of RNAs, a modification that plays a role in the efficiency of mRNA splicing and RNA processing. Its function in the WMM complex is unknown. In Mus musculus (Mouse), this protein is E3 ubiquitin-protein ligase Hakai.